The chain runs to 138 residues: Lactoylglutathione lyase (138 aa).

Residues 2-126 form the VOC domain; sequence RLLHTMLRVG…DGYKIEFIQK (125 aa). A Ni(2+)-binding site is contributed by His-5. Arg-9 is a substrate binding site. Glu-56 provides a ligand contact to Ni(2+). The substrate site is built by Asn-60 and His-74. His-74 and Glu-122 together coordinate Ni(2+). Residue Glu-122 is the Proton donor/acceptor of the active site.

The protein belongs to the glyoxalase I family. Requires Ni(2+) as cofactor.

It catalyses the reaction (R)-S-lactoylglutathione = methylglyoxal + glutathione. Its pathway is secondary metabolite metabolism; methylglyoxal degradation; (R)-lactate from methylglyoxal: step 1/2. In terms of biological role, catalyzes the conversion of hemimercaptal, formed from methylglyoxal and glutathione, to S-lactoylglutathione. The polypeptide is Lactoylglutathione lyase (gloA) (Neisseria meningitidis serogroup A / serotype 4A (strain DSM 15465 / Z2491)).